An 89-amino-acid polypeptide reads, in one-letter code: Small ribosomal subunit protein uS15 (89 aa).

This sequence belongs to the universal ribosomal protein uS15 family. In terms of assembly, part of the 30S ribosomal subunit. Forms a bridge to the 50S subunit in the 70S ribosome, contacting the 23S rRNA.

One of the primary rRNA binding proteins, it binds directly to 16S rRNA where it helps nucleate assembly of the platform of the 30S subunit by binding and bridging several RNA helices of the 16S rRNA. Its function is as follows. Forms an intersubunit bridge (bridge B4) with the 23S rRNA of the 50S subunit in the ribosome. In Cupriavidus necator (strain ATCC 17699 / DSM 428 / KCTC 22496 / NCIMB 10442 / H16 / Stanier 337) (Ralstonia eutropha), this protein is Small ribosomal subunit protein uS15.